The chain runs to 78 residues: MAYVITEPCIGTKDASCVEVCPVDCIHEGEDQYYIDPDVCIDCGACEAVCPVSAIYHEDFVPEEWKSYIQKNRDFFKK.

4Fe-4S ferredoxin-type domains are found at residues 2–29 (AYVITEPCIGTKDASCVEVCPVDCIHEG) and 31–60 (DQYYIDPDVCIDCGACEAVCPVSAIYHEDF). 2 residues coordinate [3Fe-4S] cluster: C9 and C17. [4Fe-4S] cluster is bound by residues C21, C40, C43, and C46. Position 50 (C50) interacts with [3Fe-4S] cluster.

As to quaternary structure, monomer. Requires [4Fe-4S] cluster as cofactor. [3Fe-4S] cluster is required as a cofactor.

This is Ferredoxin 7Fe (fdxA) from Hydrogenibacillus schlegelii (Bacillus schlegelii).